The following is a 452-amino-acid chain: Membrane-bound acylglycerophosphatidylinositol O-acyltransferase mboa-7 (452 aa).

The next 4 helical transmembrane spans lie at 4-24 (IIGL…FSFA), 53-73 (PRIA…AFAP), 79-99 (FYVF…HYFL), and 104-124 (VASH…GITF). Asn137 is a glycosylation site (N-linked (GlcNAc...) asparagine). The next 3 helical transmembrane spans lie at 153-173 (FAYF…YQML), 220-240 (AIWE…FVVF), and 244-264 (VYSA…GIYP). Asn319 carries N-linked (GlcNAc...) asparagine glycosylation. His350 is a catalytic residue. The helical transmembrane segment at 354 to 374 (AGYFMSFGVVAMCAILEDVIF) threads the bilayer. N-linked (GlcNAc...) asparagine glycosylation occurs at Asn414. A helical transmembrane segment spans residues 421–441 (FWSSIYYWLPLLCVPFYIYSV).

It belongs to the membrane-bound acyltransferase family.

Its subcellular location is the membrane. The enzyme catalyses a 1-acyl-sn-glycero-3-phospho-(1D-myo-inositol) + an acyl-CoA = a 1,2-diacyl-sn-glycero-3-phospho-(1D-myo-inositol) + CoA. It catalyses the reaction a fatty acyl-[ACP] + a 1-acyl-sn-glycero-3-phosphate = a 1,2-diacyl-sn-glycero-3-phosphate + holo-[ACP]. The protein operates within lipid metabolism; phospholipid metabolism. Its function is as follows. Acyltransferase which mediates the conversion of lysophosphatidylinositol (1-acylglycerophosphatidylinositol or LPI) into phosphatidylinositol (1,2-diacyl-sn-glycero-3-phosphoinositol or PI) (LPIAT activity). Prefers arachidonoyl-CoA or eicosapentaenoic acid (EPA) as the acyl donor. Prefers sn-2-LPI rather than sn-1-LPI as the acyl acceptor. Lysophospholipid acyltransferases (LPLATs) catalyze the reacylation step of the phospholipid remodeling pathway also known as the Lands cycle. This chain is Membrane-bound acylglycerophosphatidylinositol O-acyltransferase mboa-7, found in Caenorhabditis briggsae.